A 1657-amino-acid polypeptide reads, in one-letter code: Alsin (1657 aa).

3 RCC1 repeats span residues 59 to 108 (DGEV…AVTD), 109 to 167 (NGVA…ALSI), and 169 to 218 (REIW…ALVQ). The segment at 432 to 480 (TGAQAGSSAIGPEGLKDSREEQVKQESMQGKKSSSLVDIREEETEGGSR) is disordered. The segment covering 445–455 (GLKDSREEQVK) has biased composition (basic and acidic residues). The span at 456–467 (QESMQGKKSSSL) shows a compositional bias: polar residues. 4 positions are modified to phosphoserine: Ser465, Ser466, Ser483, and Ser492. Thr510 bears the Phosphothreonine mark. 2 RCC1 repeats span residues 525–576 (RTEV…ALTA) and 578–627 (SQVY…FLVD). N6-acetyllysine is present on Lys533. In terms of domain architecture, DH spans 690–885 (GYIASLHELA…ECLALHLGRK (196 aa)). Residues 901-1007 (GKMTDSLRKP…RAISQAVDQA (107 aa)) form the PH domain. 8 MORN repeats span residues 1049-1071 (YDGR…DGKM), 1072-1094 (YSGM…NKAM), 1100-1122 (YVGH…SGEV), 1123-1145 (FEGC…KLTS), 1151-1173 (FIGQ…TRGE), 1175-1197 (YMGM…FGLY), 1198-1220 (YEGN…DDTI), and 1221-1244 (YEGE…NGDY). Ser1335 carries the phosphoserine modification. The 145-residue stretch at 1513 to 1657 (KQPDIALLGF…YYQIQREKLN (145 aa)) folds into the VPS9 domain.

As to quaternary structure, forms a heteromeric complex with ALS2CL. Interacts with ALS2CL.

In terms of biological role, may act as a GTPase regulator. Controls survival and growth of spinal motoneurons. This is Alsin (ALS2) from Homo sapiens (Human).